The chain runs to 130 residues: Protein YoeA (130 aa).

The N-terminal stretch at 1–28 (MLYNIPCRIYILSTLSLCISGIVSTATA) is a signal peptide. The region spanning 51 to 130 (NLWESPATIQ…RCRRYSRGER (80 aa)) is the TBDR plug domain.

Belongs to the TonB-dependent receptor family.

The protein is Protein YoeA (yoeA) of Escherichia coli (strain K12).